The following is a 103-amino-acid chain: Co-chaperonin GroES (103 aa).

It belongs to the GroES chaperonin family. Heptamer of 7 subunits arranged in a ring. Interacts with the chaperonin GroEL.

It is found in the cytoplasm. Its function is as follows. Together with the chaperonin GroEL, plays an essential role in assisting protein folding. The GroEL-GroES system forms a nano-cage that allows encapsulation of the non-native substrate proteins and provides a physical environment optimized to promote and accelerate protein folding. GroES binds to the apical surface of the GroEL ring, thereby capping the opening of the GroEL channel. The polypeptide is Co-chaperonin GroES (Prochlorococcus marinus subsp. pastoris (strain CCMP1986 / NIES-2087 / MED4)).